We begin with the raw amino-acid sequence, 478 residues long: Glycogen synthase (478 aa).

K15 is an ADP-alpha-D-glucose binding site.

Belongs to the glycosyltransferase 1 family. Bacterial/plant glycogen synthase subfamily.

The enzyme catalyses [(1-&gt;4)-alpha-D-glucosyl](n) + ADP-alpha-D-glucose = [(1-&gt;4)-alpha-D-glucosyl](n+1) + ADP + H(+). It participates in glycan biosynthesis; glycogen biosynthesis. In terms of biological role, synthesizes alpha-1,4-glucan chains using ADP-glucose. The chain is Glycogen synthase from Acholeplasma laidlawii (strain PG-8A).